The sequence spans 685 residues: Probable glucan endo-1,3-beta-glucosidase btgC (685 aa).

3 disordered regions span residues 1-96 (MSGP…NLGP), 119-168 (GIDA…RDSY), and 180-202 (PAGQ…SPYQ). The Cytoplasmic portion of the chain corresponds to 1–312 (MSGPHRSFSF…PTPGGGSRKR (312 aa)). Polar residues-rich tracts occupy residues 47-61 (SARS…SSGF) and 73-90 (GQNS…TTPG). The chain crosses the membrane as a helical; Signal-anchor for type II membrane protein span at residues 313–333 (GWIVGLALAFIVVGAIVGGAV). At 334-685 (GGTLGNRENE…IPDCGGKTAA (352 aa)) the chain is on the extracellular side. The interval 335-369 (GTLGNRENEAPDTTKSASSDTESNGDLNKDSSEIK) is disordered. Over residues 345–360 (PDTTKSASSDTESNGD) the composition is skewed to polar residues. N-linked (GlcNAc...) asparagine glycans are attached at residues Asn405, Asn428, and Asn456. Catalysis depends on Glu488, which acts as the Proton donor. Glu587 serves as the catalytic Nucleophile. N-linked (GlcNAc...) asparagine glycosylation occurs at Asn632.

It belongs to the glycosyl hydrolase 17 family.

It localises to the cell membrane. It carries out the reaction Hydrolysis of (1-&gt;3)-beta-D-glucosidic linkages in (1-&gt;3)-beta-D-glucans.. Functionally, glucanases play a role in cell expansion during growth, in cell-cell fusion during mating, and in spore release during sporulation. This enzyme may be involved in beta-glucan degradation. Active on laminarin and lichenan. This is Probable glucan endo-1,3-beta-glucosidase btgC (btgC) from Aspergillus oryzae (strain ATCC 42149 / RIB 40) (Yellow koji mold).